Reading from the N-terminus, the 338-residue chain is tRNA pseudouridine synthase D (338 aa).

Residue Asp79 is the Nucleophile of the active site. Positions 154 to 303 constitute a TRUD domain; sequence GVPNYFGEQR…EEAWRANILY (150 aa).

This sequence belongs to the pseudouridine synthase TruD family.

The catalysed reaction is uridine(13) in tRNA = pseudouridine(13) in tRNA. Responsible for synthesis of pseudouridine from uracil-13 in transfer RNAs. This is tRNA pseudouridine synthase D from Legionella pneumophila (strain Lens).